A 401-amino-acid chain; its full sequence is Sulfate adenylyltransferase (401 aa).

It belongs to the sulfate adenylyltransferase family.

It catalyses the reaction sulfate + ATP + H(+) = adenosine 5'-phosphosulfate + diphosphate. Its pathway is sulfur metabolism; hydrogen sulfide biosynthesis; sulfite from sulfate: step 1/3. This is Sulfate adenylyltransferase from Alcanivorax borkumensis (strain ATCC 700651 / DSM 11573 / NCIMB 13689 / SK2).